A 141-amino-acid chain; its full sequence is Putative nickel-responsive regulator (141 aa).

His-80, His-91, His-93, and Cys-99 together coordinate Ni(2+).

The protein belongs to the transcriptional regulatory CopG/NikR family. Requires Ni(2+) as cofactor.

Its function is as follows. Transcriptional regulator. The protein is Putative nickel-responsive regulator of Methanococcus maripaludis (strain DSM 14266 / JCM 13030 / NBRC 101832 / S2 / LL).